The following is a 103-amino-acid chain: Large ribosomal subunit protein bL21 (103 aa).

This sequence belongs to the bacterial ribosomal protein bL21 family. In terms of assembly, part of the 50S ribosomal subunit. Contacts protein L20.

Functionally, this protein binds to 23S rRNA in the presence of protein L20. This is Large ribosomal subunit protein bL21 from Bordetella petrii (strain ATCC BAA-461 / DSM 12804 / CCUG 43448).